A 440-amino-acid polypeptide reads, in one-letter code: UDP-N-acetylmuramoylalanine--D-glutamate ligase (440 aa).

Gly-128–Thr-134 contacts ATP.

The protein belongs to the MurCDEF family.

The protein resides in the cytoplasm. The enzyme catalyses UDP-N-acetyl-alpha-D-muramoyl-L-alanine + D-glutamate + ATP = UDP-N-acetyl-alpha-D-muramoyl-L-alanyl-D-glutamate + ADP + phosphate + H(+). Its pathway is cell wall biogenesis; peptidoglycan biosynthesis. Functionally, cell wall formation. Catalyzes the addition of glutamate to the nucleotide precursor UDP-N-acetylmuramoyl-L-alanine (UMA). In Lawsonia intracellularis (strain PHE/MN1-00), this protein is UDP-N-acetylmuramoylalanine--D-glutamate ligase.